The following is a 483-amino-acid chain: Rhamnulokinase (483 aa).

Residue 11 to 15 (ASSGR) participates in ATP binding. Residues Gly79 and 234–236 (HDT) contribute to the substrate site. Asp235 acts as the Proton acceptor in catalysis. Position 257 (Thr257) interacts with ATP. Position 294 (Asn294) interacts with substrate. ATP is bound at residue Gln302. A disulfide bridge connects residues Cys352 and Cys369. An ATP-binding site is contributed by Gly401.

It belongs to the rhamnulokinase family. It depends on Mg(2+) as a cofactor.

It carries out the reaction L-rhamnulose + ATP = L-rhamnulose 1-phosphate + ADP + H(+). It participates in carbohydrate degradation; L-rhamnose degradation; glycerone phosphate from L-rhamnose: step 2/3. Its function is as follows. Involved in the catabolism of L-rhamnose (6-deoxy-L-mannose). Catalyzes the transfer of the gamma-phosphate group from ATP to the 1-hydroxyl group of L-rhamnulose to yield L-rhamnulose 1-phosphate. The protein is Rhamnulokinase of Listeria monocytogenes serotype 4b (strain CLIP80459).